Reading from the N-terminus, the 501-residue chain is Glucans biosynthesis protein G (501 aa).

The signal sequence occupies residues 1 to 25 (MNRRQVLTGLAALPLLQAKPDPAAA).

It belongs to the OpgD/OpgG family.

Its subcellular location is the periplasm. It participates in glycan metabolism; osmoregulated periplasmic glucan (OPG) biosynthesis. Functionally, involved in the biosynthesis of osmoregulated periplasmic glucans (OPGs). This is Glucans biosynthesis protein G from Rhodopseudomonas palustris (strain ATCC BAA-98 / CGA009).